The following is a 784-amino-acid chain: Toll-like receptor 2 (784 aa).

A signal peptide spans 1 to 20 (MPRALWTAWVWAVIILSMEG). Topologically, residues 21–587 (ASHQASSLSC…ARLSLSECHR (567 aa)) are extracellular. C30 and C36 are oxidised to a cystine. LRR repeat units follow at residues 54–77 (VKSL…RCVN), 78–101 (LKTL…HLRN), 102–125 (LEYL…SLYA), 126–150 (LKFL…HLPN), 151–175 (LRTL…GLIF), 176–199 (LEEL…SIQN), 200–223 (ISHL…IVSS), 224–250 (LDCL…MNTS), 251–278 (VKKL…YVSG), 279–308 (ILEV…HLGN), 309–337 (VETL…LTGK), 338–361 (VKRV…HLKS), 362–388 (LEYL…AWPF), 389–414 (LQTL…TLEN), 415–437 (LNNL…WPGK), 438–457 (MKQL…CLPQ), 458–478 (TLEI…ILPQ), 479–500 (LKEL…FLPV), and 501–524 (LSVM…SFQQ). A glycan (N-linked (GlcNAc...) asparagine) is linked at N114. Residue N199 is glycosylated (N-linked (GlcNAc...) asparagine). The N-linked (GlcNAc...) asparagine glycan is linked to N248. Residues C353 and C382 are joined by a disulfide bond. C432 and C454 are joined by a disulfide. N442 is a glycosylation site (N-linked (GlcNAc...) asparagine). Residues 525–579 (LKTLEAGGNNFICSCDFLSFTQGQQALGRVLVDWPAEYRCDSPSHVRGQRVQDAR) form the LRRCT domain. The helical transmembrane segment at 588–608 (AAVVSAACCALFLLLLLTGVL) threads the bilayer. Residues 609 to 784 (CHRFHGLWYM…WLNLRAAIRS (176 aa)) lie on the Cytoplasmic side of the membrane. A TIR domain is found at 639-782 (ICYDAFVSYS…GFWLNLRAAI (144 aa)). K754 participates in a covalent cross-link: Glycyl lysine isopeptide (Lys-Gly) (interchain with G-Cter in ubiquitin). The ATG16L1-binding motif motif lies at 761–778 (YLEWPVDETQQEGFWLNL).

Belongs to the Toll-like receptor family. Interacts with LY96, TLR1 and TLR6 (via extracellular domain). TLR2 seems to exist in heterodimers with either TLR1 or TLR6 before stimulation by the ligand. The heterodimers form bigger oligomers in response to their corresponding ligands as well as further heterotypic associations with other receptors such as CD14 and/or CD36. Binds MYD88 (via TIR domain). Interacts with TICAM1. Interacts with CNPY3. Interacts with ATG16L1. Interacts with PPP1R11. Interacts with TICAM2. Interacts with TIRAP. In terms of processing, ubiquitinated at Lys-754 by PPP1R11, leading to its degradation. Deubiquitinated by USP2. Glycosylation of Asn-442 is critical for secretion of the N-terminal ectodomain of TLR2.

It localises to the membrane. The protein localises to the cytoplasmic vesicle. Its subcellular location is the phagosome membrane. The protein resides in the membrane raft. Cooperates with LY96 to mediate the innate immune response to bacterial lipoproteins and other microbial cell wall components. Cooperates with TLR1 or TLR6 to mediate the innate immune response to bacterial lipoproteins or lipopeptides. Acts via MYD88 and TRAF6, leading to NF-kappa-B activation, cytokine secretion and the inflammatory response. May also promote apoptosis in response to lipoproteins. Forms activation clusters composed of several receptors depending on the ligand, these clusters trigger signaling from the cell surface and subsequently are targeted to the Golgi in a lipid-raft dependent pathway. Forms the cluster TLR2:TLR6:CD14:CD36 in response to diacylated lipopeptides and TLR2:TLR1:CD14 in response to triacylated lipopeptides. The sequence is that of Toll-like receptor 2 (TLR2) from Bubalus bubalis (Domestic water buffalo).